Reading from the N-terminus, the 86-residue chain is ATP synthase subunit c (86 aa).

Helical transmembrane passes span 4–24 (AIVAAASAIGAGIAVATGIGA) and 57–77 (VAIAESSAIYGLVISIILLFV).

Belongs to the ATPase C chain family. As to quaternary structure, F-type ATPases have 2 components, F(1) - the catalytic core - and F(0) - the membrane proton channel. F(1) has five subunits: alpha(3), beta(3), gamma(1), delta(1), epsilon(1). F(0) has three main subunits: a(1), b(2) and c(10-14). The alpha and beta chains form an alternating ring which encloses part of the gamma chain. F(1) is attached to F(0) by a central stalk formed by the gamma and epsilon chains, while a peripheral stalk is formed by the delta and b chains.

It is found in the cell membrane. Its function is as follows. F(1)F(0) ATP synthase produces ATP from ADP in the presence of a proton or sodium gradient. F-type ATPases consist of two structural domains, F(1) containing the extramembraneous catalytic core and F(0) containing the membrane proton channel, linked together by a central stalk and a peripheral stalk. During catalysis, ATP synthesis in the catalytic domain of F(1) is coupled via a rotary mechanism of the central stalk subunits to proton translocation. Key component of the F(0) channel; it plays a direct role in translocation across the membrane. A homomeric c-ring of between 10-14 subunits forms the central stalk rotor element with the F(1) delta and epsilon subunits. The sequence is that of ATP synthase subunit c from Clostridioides difficile (strain 630) (Peptoclostridium difficile).